Consider the following 300-residue polypeptide: GTPase Era (300 aa).

The 172-residue stretch at 5–176 (HSGFVCLVGR…IDVLAAALPA (172 aa)) folds into the Era-type G domain. A G1 region spans residues 13–20 (GRPNTGKS). Residue 13–20 (GRPNTGKS) coordinates GTP. Residues 39–43 (QTTRH) form a G2 region. Residues 60–63 (DTPG) are G3. Residues 60 to 64 (DTPGL) and 125 to 128 (TKID) each bind GTP. Positions 125–128 (TKID) are G4. The interval 155-157 (VSA) is G5. A KH type-2 domain is found at 207–286 (VRDELPHSLA…YLDLRVKVAK (80 aa)).

Belongs to the TRAFAC class TrmE-Era-EngA-EngB-Septin-like GTPase superfamily. Era GTPase family. Monomer.

Its subcellular location is the cell envelope. It is found in the secreted. The protein localises to the cell wall. Exhibits GTPase activity. Binds RNA but is probably not involved in ribosome assembly in mycobacteria. The chain is GTPase Era from Mycobacterium bovis (strain ATCC BAA-935 / AF2122/97).